A 101-amino-acid chain; its full sequence is Small ribosomal subunit protein uS14 (101 aa).

This sequence belongs to the universal ribosomal protein uS14 family. As to quaternary structure, part of the 30S ribosomal subunit. Contacts proteins S3 and S10.

Functionally, binds 16S rRNA, required for the assembly of 30S particles and may also be responsible for determining the conformation of the 16S rRNA at the A site. In Nitrosospira multiformis (strain ATCC 25196 / NCIMB 11849 / C 71), this protein is Small ribosomal subunit protein uS14.